Reading from the N-terminus, the 34-residue chain is Photosystem I reaction center subunit XII (34 aa).

A helical transmembrane segment spans residues Leu-9 to Ile-29.

The protein belongs to the PsaM family.

Its subcellular location is the cellular thylakoid membrane. The polypeptide is Photosystem I reaction center subunit XII (Prochlorococcus marinus (strain MIT 9312)).